Consider the following 229-residue polypeptide: MSASLNRLERKLGHTFKNQDLMLLALTHRSFASRNNERLEFLGDAILNFVAGEALFERFPQAKEGQLSRLRARLVKGETLALLARGFDLGDHLRLGSGELKSGGFRRESILADALEALIGAIYLDAGLNTVRERVLGWLAGELDSLTLVDTNKDPKTRLQEFLQSRACELPRYEVVDIQGEPHCRTFFVECRVALLNDKTYGQGASRRIAEQVAAAAALVALGVENGND.

Residues 5–127 (LNRLERKLGH…LIGAIYLDAG (123 aa)) enclose the RNase III domain. Glu40 contributes to the Mg(2+) binding site. Residue Asp44 is part of the active site. Residues Asp113 and Glu116 each coordinate Mg(2+). Glu116 is an active-site residue. The DRBM domain maps to 154–224 (DPKTRLQEFL…AAAALVALGV (71 aa)).

The protein belongs to the ribonuclease III family. In terms of assembly, homodimer. It depends on Mg(2+) as a cofactor.

The protein localises to the cytoplasm. It catalyses the reaction Endonucleolytic cleavage to 5'-phosphomonoester.. Digests double-stranded RNA. Involved in the processing of primary rRNA transcript to yield the immediate precursors to the large and small rRNAs (23S and 16S). Processes some mRNAs, and tRNAs when they are encoded in the rRNA operon. Processes pre-crRNA and tracrRNA of type II CRISPR loci if present in the organism. This Azotobacter vinelandii (strain DJ / ATCC BAA-1303) protein is Ribonuclease 3.